The following is a 1146-amino-acid chain: Transcription-repair-coupling factor (1146 aa).

A Helicase ATP-binding domain is found at 617–778 (DMCQPKAMDR…MNGIRDLSII (162 aa)). 630-637 (GDVGFGKT) lines the ATP pocket. The short motif at 731-734 (DEEH) is the DEEH box element. The Helicase C-terminal domain occupies 800–953 (VREAILREIL…GFILATHDLE (154 aa)).

This sequence in the N-terminal section; belongs to the UvrB family. It in the C-terminal section; belongs to the helicase family. RecG subfamily.

It is found in the cytoplasm. In terms of biological role, couples transcription and DNA repair by recognizing RNA polymerase (RNAP) stalled at DNA lesions. Mediates ATP-dependent release of RNAP and its truncated transcript from the DNA, and recruitment of nucleotide excision repair machinery to the damaged site. This is Transcription-repair-coupling factor from Haemophilus influenzae (strain ATCC 51907 / DSM 11121 / KW20 / Rd).